Reading from the N-terminus, the 619-residue chain is DNA mismatch repair protein MutL (619 aa).

The protein belongs to the DNA mismatch repair MutL/HexB family.

Its function is as follows. This protein is involved in the repair of mismatches in DNA. It is required for dam-dependent methyl-directed DNA mismatch repair. May act as a 'molecular matchmaker', a protein that promotes the formation of a stable complex between two or more DNA-binding proteins in an ATP-dependent manner without itself being part of a final effector complex. In Xylella fastidiosa (strain M23), this protein is DNA mismatch repair protein MutL.